The chain runs to 337 residues: Putative F-box protein At4g09870 (337 aa).

Residues 1-46 (MSISELSQDLLEEILCRVPAISLKKLRSTCKLWNSLFIDKRVRNEL) enclose the F-box domain.

This Arabidopsis thaliana (Mouse-ear cress) protein is Putative F-box protein At4g09870.